A 328-amino-acid chain; its full sequence is Stress response kinase A (328 aa).

Aspartate 201 serves as the catalytic Proton acceptor. Mg(2+) is bound by residues asparagine 206 and aspartate 217. Aspartate 217 is a catalytic residue.

Belongs to the SrkA/RdoA protein kinase family. As to quaternary structure, monomer. Mg(2+) serves as cofactor.

The protein localises to the cytoplasm. It carries out the reaction L-seryl-[protein] + ATP = O-phospho-L-seryl-[protein] + ADP + H(+). It catalyses the reaction L-threonyl-[protein] + ATP = O-phospho-L-threonyl-[protein] + ADP + H(+). In terms of biological role, a protein kinase that phosphorylates Ser and Thr residues. Probably acts to suppress the effects of stress linked to accumulation of reactive oxygen species. Probably involved in the extracytoplasmic stress response. The sequence is that of Stress response kinase A from Escherichia coli O6:H1 (strain CFT073 / ATCC 700928 / UPEC).